Consider the following 726-residue polypeptide: Catalase-peroxidase (726 aa).

A disordered region spans residues 1–33; the sequence is MSTSDDIHNTTATGKCPFHQGGHDQSAGAGTTT. The segment at residues 105 to 226 is a cross-link (tryptophyl-tyrosyl-methioninium (Trp-Tyr) (with M-252)); that stretch reads WHGAGTYRSI…LGATEMGLIY (122 aa). The active-site Proton acceptor is the histidine 106. The tryptophyl-tyrosyl-methioninium (Tyr-Met) (with W-105) cross-link spans 226 to 252; the sequence is YVNPEGPDHSGEPLSAAAAIRATFGNM. Residue histidine 267 coordinates heme b.

This sequence belongs to the peroxidase family. Peroxidase/catalase subfamily. As to quaternary structure, homodimer or homotetramer. Heme b is required as a cofactor. Formation of the three residue Trp-Tyr-Met cross-link is important for the catalase, but not the peroxidase activity of the enzyme.

The catalysed reaction is H2O2 + AH2 = A + 2 H2O. It catalyses the reaction 2 H2O2 = O2 + 2 H2O. Its function is as follows. Bifunctional enzyme with both catalase and broad-spectrum peroxidase activity. The protein is Catalase-peroxidase of Shigella sonnei (strain Ss046).